A 376-amino-acid polypeptide reads, in one-letter code: Alpha-2,8-sialyltransferase 8E (376 aa).

Residues 1-17 (MRYADPSANRDLLGNRT) are Cytoplasmic-facing. A helical; Signal-anchor for type II membrane protein transmembrane segment spans residues 18-38 (LLFIFICAFALVTLLQQILYG). The Lumenal segment spans residues 39–376 (RNYIKRYFEF…RVHTGTCSCC (338 aa)). 2 N-linked (GlcNAc...) asparagine glycosylation sites follow: Asn-56 and Asn-96. 2 cysteine pairs are disulfide-bonded: Cys-164/Cys-313 and Cys-178/Cys-373. Substrate-binding positions include Asn-192 and 214-216 (NPS). N-linked (GlcNAc...) asparagine glycans are attached at residues Asn-241 and Asn-284. 300–302 (STG) provides a ligand contact to substrate. His-348 (proton donor/acceptor) is an active-site residue.

The protein belongs to the glycosyltransferase 29 family.

The protein resides in the golgi apparatus membrane. It catalyses the reaction a ganglioside GQ1c (d18:1(4E)) + CMP-N-acetyl-beta-neuraminate = a ganglioside GP1c (d18:1(4E)) + CMP + H(+). It functions in the pathway protein modification; protein glycosylation. Involved in the synthesis of gangliosides GD1c, GT1a, GQ1b, GP1c and GT3 from GD1a, GT1b, GM1b and GD3 respectively. The sequence is that of Alpha-2,8-sialyltransferase 8E (ST8SIA5) from Pan troglodytes (Chimpanzee).